The sequence spans 237 residues: U2 small nuclear ribonucleoprotein A' (237 aa).

3 LRR repeats span residues 53–74 (RTNIVDFTNNELEELPPLGHND), 75–95 (TVHTLLLSRNRLGRLDASRLP), and 97–118 (YLVNLNLAMNRFEKFEQLQGLR). Positions 132 to 170 (NVICHKEQYRETVIALCPQLAVLDGERVRQAERQAAPQN) constitute an LRRCT domain. The tract at residues 161-182 (QAERQAAPQNEKTDTPTEGPQP) is disordered.

Belongs to the U2 small nuclear ribonucleoprotein A family. In terms of assembly, associated with the spliceosome.

The protein localises to the nucleus. In terms of biological role, involved in pre-mRNA splicing. This chain is U2 small nuclear ribonucleoprotein A' (LEA1), found in Eremothecium gossypii (strain ATCC 10895 / CBS 109.51 / FGSC 9923 / NRRL Y-1056) (Yeast).